The primary structure comprises 331 residues: Tetraacyldisaccharide 4'-kinase (331 aa).

Residue 51-58 (TAGGAGKT) coordinates ATP.

Belongs to the LpxK family.

The catalysed reaction is a lipid A disaccharide + ATP = a lipid IVA + ADP + H(+). It participates in glycolipid biosynthesis; lipid IV(A) biosynthesis; lipid IV(A) from (3R)-3-hydroxytetradecanoyl-[acyl-carrier-protein] and UDP-N-acetyl-alpha-D-glucosamine: step 6/6. Transfers the gamma-phosphate of ATP to the 4'-position of a tetraacyldisaccharide 1-phosphate intermediate (termed DS-1-P) to form tetraacyldisaccharide 1,4'-bis-phosphate (lipid IVA). The chain is Tetraacyldisaccharide 4'-kinase from Rhodospirillum rubrum (strain ATCC 11170 / ATH 1.1.1 / DSM 467 / LMG 4362 / NCIMB 8255 / S1).